Consider the following 118-residue polypeptide: Small ribosomal subunit protein uS13 (118 aa).

Positions 93 to 118 are disordered; it reads KKLPVRGQRTKTNARTRKGPRKLMKK.

This sequence belongs to the universal ribosomal protein uS13 family. As to quaternary structure, part of the 30S ribosomal subunit. Forms a loose heterodimer with protein S19. Forms two bridges to the 50S subunit in the 70S ribosome.

Located at the top of the head of the 30S subunit, it contacts several helices of the 16S rRNA. In the 70S ribosome it contacts the 23S rRNA (bridge B1a) and protein L5 of the 50S subunit (bridge B1b), connecting the 2 subunits; these bridges are implicated in subunit movement. Contacts the tRNAs in the A and P-sites. The polypeptide is Small ribosomal subunit protein uS13 (Buchnera aphidicola subsp. Baizongia pistaciae (strain Bp)).